A 473-amino-acid polypeptide reads, in one-letter code: 3-isopropylmalate dehydratase large subunit (473 aa).

Residues cysteine 353, cysteine 414, and cysteine 417 each coordinate [4Fe-4S] cluster.

Belongs to the aconitase/IPM isomerase family. LeuC type 1 subfamily. As to quaternary structure, heterodimer of LeuC and LeuD. [4Fe-4S] cluster serves as cofactor.

It carries out the reaction (2R,3S)-3-isopropylmalate = (2S)-2-isopropylmalate. The protein operates within amino-acid biosynthesis; L-leucine biosynthesis; L-leucine from 3-methyl-2-oxobutanoate: step 2/4. Functionally, catalyzes the isomerization between 2-isopropylmalate and 3-isopropylmalate, via the formation of 2-isopropylmaleate. This is 3-isopropylmalate dehydratase large subunit from Cellvibrio japonicus (strain Ueda107) (Pseudomonas fluorescens subsp. cellulosa).